We begin with the raw amino-acid sequence, 583 residues long: Kelch-like protein 38 (583 aa).

Residues 34–101 (TDVILCTEDK…IYTGSITITM (68 aa)) form the BTB domain. The BACK domain occupies 136–237 (CLSMIRLSEI…HPTYLFQFIA (102 aa)). Kelch repeat units lie at residues 285–332 (TLVV…CIHS), 333–385 (ILYV…SYLH), 386–433 (FIFA…ANDQ), 435–481 (IYVF…VIED), 482–523 (KIYI…VINN), and 525–575 (LYVT…PLIC).

The protein is Kelch-like protein 38 (klhl38) of Danio rerio (Zebrafish).